We begin with the raw amino-acid sequence, 231 residues long: 7-cyano-7-deazaguanine synthase (231 aa).

7–17 (LSSGLDSVAAL) serves as a coordination point for ATP. Zn(2+)-binding residues include cysteine 195, cysteine 203, cysteine 206, and cysteine 209.

The protein belongs to the QueC family. The cofactor is Zn(2+).

It catalyses the reaction 7-carboxy-7-deazaguanine + NH4(+) + ATP = 7-cyano-7-deazaguanine + ADP + phosphate + H2O + H(+). Its pathway is purine metabolism; 7-cyano-7-deazaguanine biosynthesis. Catalyzes the ATP-dependent conversion of 7-carboxy-7-deazaguanine (CDG) to 7-cyano-7-deazaguanine (preQ(0)). The chain is 7-cyano-7-deazaguanine synthase from Methanosarcina barkeri (strain Fusaro / DSM 804).